The following is a 587-amino-acid chain: Aspartate--tRNA ligase (587 aa).

Glutamate 174 is a binding site for L-aspartate. The aspartate stretch occupies residues 198 to 201; that stretch reads QITK. An L-aspartate-binding site is contributed by arginine 220. Residues 220–222 and glutamine 229 contribute to the ATP site; that span reads RDE. L-aspartate is bound at residue histidine 443. Glutamate 477 is an ATP binding site. Residue arginine 484 coordinates L-aspartate. 529–532 serves as a coordination point for ATP; it reads GLDR.

Belongs to the class-II aminoacyl-tRNA synthetase family. Type 1 subfamily. As to quaternary structure, homodimer.

The protein resides in the cytoplasm. It catalyses the reaction tRNA(Asp) + L-aspartate + ATP = L-aspartyl-tRNA(Asp) + AMP + diphosphate. Its function is as follows. Catalyzes the attachment of L-aspartate to tRNA(Asp) in a two-step reaction: L-aspartate is first activated by ATP to form Asp-AMP and then transferred to the acceptor end of tRNA(Asp). In Streptococcus pneumoniae serotype 2 (strain D39 / NCTC 7466), this protein is Aspartate--tRNA ligase.